The primary structure comprises 40 residues: Alpha-1B-glycoprotein (40 aa).

Asn-23 carries N-linked (GlcNAc...) asparagine glycosylation.

Interacts with CRISP3. Plasma.

Its subcellular location is the secreted. This is Alpha-1B-glycoprotein (A1BG) from Sus scrofa (Pig).